The sequence spans 587 residues: Phosphatidylinositol-3-phosphatase SAC1 (587 aa).

Residues 1 to 520 (MAATAYEHLK…SPLSVPRDWK (520 aa)) lie on the Cytoplasmic side of the membrane. The region spanning 122 to 451 (LNHVLSTDGF…ANACAKQYAG (330 aa)) is the SAC domain. An essential for phosphatidylinositol-4-phosphate phosphatase activity region spans residues 452–587 (TGALKTDFTR…PRLVQKEKID (136 aa)). Position 456 is an N6-acetyllysine (Lys456). Residues 521–541 (FLALPIIMVVAFSMCIICLLM) traverse the membrane as a helical segment. The Lumenal segment spans residues 542–548 (AGDTWTE). The chain crosses the membrane as a helical span at residues 549 to 569 (TLAYVLFWGVASIGTFFIILY). Residues 570–587 (NGKDFVDAPRLVQKEKID) are Cytoplasmic-facing.

As to quaternary structure, interacts with TMEM39A. Interacts with SEC23A and SEC24A; this interaction is reduced in the absence of TMEM39A. Interacts with PLEKHA3 and VAPA and/or VAPB to form a ternary complex. Detected in spleen, lung, liver, skeletal muscle, kidney, testis and in cerebellar Purkinje cells (at protein level). Ubiquitous. Highly expressed in brain, spleen, liver and kidney.

The protein resides in the endoplasmic reticulum membrane. It localises to the golgi apparatus membrane. It catalyses the reaction a 1,2-diacyl-sn-glycero-3-phospho-(1D-myo-inositol-3-phosphate) + H2O = a 1,2-diacyl-sn-glycero-3-phospho-(1D-myo-inositol) + phosphate. The enzyme catalyses a 1,2-diacyl-sn-glycero-3-phospho-(1D-myo-inositol 4-phosphate) + H2O = a 1,2-diacyl-sn-glycero-3-phospho-(1D-myo-inositol) + phosphate. Its function is as follows. Phosphoinositide phosphatase which catalyzes the hydrolysis of phosphatidylinositol 4-phosphate (PtdIns(4)P), phosphatidylinositol 3-phosphate (PtdIns(3)P) and has low activity towards phosphatidylinositol-3,5-bisphosphate (PtdIns(3,5)P2). Shows a very robust PtdIns(4)P phosphatase activity when it binds PtdIns(4)P in a 'cis' configuration in the cellular environment, with much less activity seen when it binds PtdIns(4)P in 'trans' configuration. PtdIns(4)P phosphatase activity (when it binds PtdIns(4)P in 'trans' configuration) is enhanced in the presence of PLEKHA3. This Rattus norvegicus (Rat) protein is Phosphatidylinositol-3-phosphatase SAC1 (Sacm1l).